Here is a 277-residue protein sequence, read N- to C-terminus: 4-hydroxy-3-methylbut-2-enyl diphosphate reductase (277 aa).

C12 contacts [4Fe-4S] cluster. (2E)-4-hydroxy-3-methylbut-2-enyl diphosphate is bound by residues H36 and H70. The dimethylallyl diphosphate site is built by H36 and H70. Isopentenyl diphosphate contacts are provided by H36 and H70. C92 contributes to the [4Fe-4S] cluster binding site. H120 is a binding site for (2E)-4-hydroxy-3-methylbut-2-enyl diphosphate. H120 serves as a coordination point for dimethylallyl diphosphate. H120 is a binding site for isopentenyl diphosphate. The Proton donor role is filled by E122. T158 is a (2E)-4-hydroxy-3-methylbut-2-enyl diphosphate binding site. Residue C186 participates in [4Fe-4S] cluster binding. Residues S214, N216, and S258 each contribute to the (2E)-4-hydroxy-3-methylbut-2-enyl diphosphate site. Dimethylallyl diphosphate-binding residues include S214, N216, and S258. Residues S214, N216, and S258 each contribute to the isopentenyl diphosphate site.

The protein belongs to the IspH family. [4Fe-4S] cluster serves as cofactor.

It carries out the reaction isopentenyl diphosphate + 2 oxidized [2Fe-2S]-[ferredoxin] + H2O = (2E)-4-hydroxy-3-methylbut-2-enyl diphosphate + 2 reduced [2Fe-2S]-[ferredoxin] + 2 H(+). The enzyme catalyses dimethylallyl diphosphate + 2 oxidized [2Fe-2S]-[ferredoxin] + H2O = (2E)-4-hydroxy-3-methylbut-2-enyl diphosphate + 2 reduced [2Fe-2S]-[ferredoxin] + 2 H(+). Its pathway is isoprenoid biosynthesis; dimethylallyl diphosphate biosynthesis; dimethylallyl diphosphate from (2E)-4-hydroxy-3-methylbutenyl diphosphate: step 1/1. The protein operates within isoprenoid biosynthesis; isopentenyl diphosphate biosynthesis via DXP pathway; isopentenyl diphosphate from 1-deoxy-D-xylulose 5-phosphate: step 6/6. Its function is as follows. Catalyzes the conversion of 1-hydroxy-2-methyl-2-(E)-butenyl 4-diphosphate (HMBPP) into a mixture of isopentenyl diphosphate (IPP) and dimethylallyl diphosphate (DMAPP). Acts in the terminal step of the DOXP/MEP pathway for isoprenoid precursor biosynthesis. In Campylobacter jejuni subsp. jejuni serotype O:2 (strain ATCC 700819 / NCTC 11168), this protein is 4-hydroxy-3-methylbut-2-enyl diphosphate reductase.